Consider the following 537-residue polypeptide: Probable protein kinase UbiB (537 aa).

The helical transmembrane segment at 30–47 (LLPWWLRALGYLLPWRWL) threads the bilayer. The Protein kinase domain occupies 126-490 (RFDSEPLASA…KRERHDHHLL (365 aa)). ATP-binding positions include 132–140 (LASASVAQV) and Lys-154. Residue Asp-289 is the Proton acceptor of the active site. 2 helical membrane-spanning segments follow: residues 489 to 507 (LLRL…LALQ) and 513 to 530 (ANAW…YLLV).

It belongs to the ABC1 family. UbiB subfamily.

The protein localises to the cell inner membrane. It participates in cofactor biosynthesis; ubiquinone biosynthesis [regulation]. Is probably a protein kinase regulator of UbiI activity which is involved in aerobic coenzyme Q (ubiquinone) biosynthesis. The chain is Probable protein kinase UbiB from Azotobacter vinelandii (strain DJ / ATCC BAA-1303).